The following is a 204-amino-acid chain: Large ribosomal subunit protein uL4 (204 aa).

Residues 53–74 (AYVSGGGKKPWRQKGRGGARAG) are disordered.

Belongs to the universal ribosomal protein uL4 family. Part of the 50S ribosomal subunit.

Its function is as follows. One of the primary rRNA binding proteins, this protein initially binds near the 5'-end of the 23S rRNA. It is important during the early stages of 50S assembly. It makes multiple contacts with different domains of the 23S rRNA in the assembled 50S subunit and ribosome. Forms part of the polypeptide exit tunnel. The protein is Large ribosomal subunit protein uL4 of Campylobacter curvus (strain 525.92).